The following is a 480-amino-acid chain: Trigger factor (480 aa).

In terms of domain architecture, PPIase FKBP-type spans 169–264; that stretch reads GDIAVVDFKG…LKELKEKELP (96 aa). The tract at residues 441–480 is disordered; the sequence is PEGSLSPAEETEAAESDADADVSQTEQENSEPSTTEVTEG. The segment covering 449-460 has biased composition (acidic residues); the sequence is EETEAAESDADA. A compositionally biased stretch (polar residues) spans 462 to 480; that stretch reads VSQTEQENSEPSTTEVTEG.

This sequence belongs to the FKBP-type PPIase family. Tig subfamily.

The protein resides in the cytoplasm. It carries out the reaction [protein]-peptidylproline (omega=180) = [protein]-peptidylproline (omega=0). Involved in protein export. Acts as a chaperone by maintaining the newly synthesized protein in an open conformation. Functions as a peptidyl-prolyl cis-trans isomerase. The sequence is that of Trigger factor from Nostoc punctiforme (strain ATCC 29133 / PCC 73102).